The following is a 129-amino-acid chain: Histone H2B.1 (129 aa).

The span at 1-17 (MSAEKKPASKAPAEKKP) shows a compositional bias: basic and acidic residues. Residues 1-35 (MSAEKKPASKAPAEKKPAAKKTAPSADGKKRTKAR) are disordered. N6-acetyllysine; alternate is present on residues K5 and K6. Glycyl lysine isopeptide (Lys-Gly) (interchain with G-Cter in SUMO); alternate cross-links involve residues K5 and K6. Phosphoserine is present on S9. The residue at position 10 (K10) is an N6-acetyllysine. K15 carries the post-translational modification N6-acetyllysine; alternate. Residue K15 forms a Glycyl lysine isopeptide (Lys-Gly) (interchain with G-Cter in SUMO); alternate linkage. Residue K16 forms a Glycyl lysine isopeptide (Lys-Gly) (interchain with G-Cter in SUMO) linkage. K122 participates in a covalent cross-link: Glycyl lysine isopeptide (Lys-Gly) (interchain with G-Cter in ubiquitin).

This sequence belongs to the histone H2B family. As to quaternary structure, the nucleosome is a histone octamer containing two molecules each of H2A, H2B, H3 and H4 assembled in one H3-H4 heterotetramer and two H2A-H2B heterodimers. The octamer wraps approximately 147 bp of DNA. In terms of processing, monoubiquitinated by the UBC2-BRE1 complex to form H2BK123ub1. H2BK123ub1 gives a specific tag for epigenetic transcriptional activation and is also prerequisite for H3K4me and H3K79me formation. H2BK123ub1 also modulates the formation of double-strand breaks during meiosis and is a prerequisite for DNA-damage checkpoint activation. Phosphorylated by STE20 to form H2BS10ph during progression through meiotic prophase. May be correlated with chromosome condensation. Post-translationally, acetylated by GCN5 to form H2BK11ac and H2BK16ac. H2BK16ac can also be formed by ESA1. Acetylation of N-terminal lysines and particularly formation of H2BK11acK16ac has a positive effect on transcription. In terms of processing, sumoylation to form H2BK6su or H2BK7su, and probably also H2BK16su or H2BK17su, occurs preferentially near the telomeres and represses gene transcription.

Its subcellular location is the nucleus. The protein localises to the chromosome. Its function is as follows. Core component of nucleosome. Nucleosomes wrap and compact DNA into chromatin, limiting DNA accessibility to the cellular machineries which require DNA as a template. Histones thereby play a central role in transcription regulation, DNA repair, DNA replication and chromosomal stability. DNA accessibility is regulated via a complex set of post-translational modifications of histones, also called histone code, and nucleosome remodeling. The chain is Histone H2B.1 (HTB1) from Candida glabrata (strain ATCC 2001 / BCRC 20586 / JCM 3761 / NBRC 0622 / NRRL Y-65 / CBS 138) (Yeast).